The chain runs to 310 residues: Ribosomal RNA small subunit methyltransferase H (310 aa).

Residues 32 to 34 (AGH), D51, F78, D99, and Q106 each bind S-adenosyl-L-methionine.

This sequence belongs to the methyltransferase superfamily. RsmH family.

Its subcellular location is the cytoplasm. The catalysed reaction is cytidine(1402) in 16S rRNA + S-adenosyl-L-methionine = N(4)-methylcytidine(1402) in 16S rRNA + S-adenosyl-L-homocysteine + H(+). Its function is as follows. Specifically methylates the N4 position of cytidine in position 1402 (C1402) of 16S rRNA. This is Ribosomal RNA small subunit methyltransferase H from Macrococcus caseolyticus (strain JCSC5402) (Macrococcoides caseolyticum).